Reading from the N-terminus, the 474-residue chain is tRNA-2-methylthio-N(6)-dimethylallyladenosine synthase (474 aa).

The region spanning 3–120 is the MTTase N-terminal domain; it reads KKLHIKTWGC…LPEMINSVRG (118 aa). C12, C49, C83, C157, C161, and C164 together coordinate [4Fe-4S] cluster. The 233-residue stretch at 143–375 folds into the Radical SAM core domain; it reads RAEGPTAFVS…QERINQQAMA (233 aa). The TRAM domain occupies 378–441; it reads RRMLGTTQRI…PNSLRGKVVR (64 aa).

The protein belongs to the methylthiotransferase family. MiaB subfamily. In terms of assembly, monomer. [4Fe-4S] cluster is required as a cofactor.

It localises to the cytoplasm. It carries out the reaction N(6)-dimethylallyladenosine(37) in tRNA + (sulfur carrier)-SH + AH2 + 2 S-adenosyl-L-methionine = 2-methylsulfanyl-N(6)-dimethylallyladenosine(37) in tRNA + (sulfur carrier)-H + 5'-deoxyadenosine + L-methionine + A + S-adenosyl-L-homocysteine + 2 H(+). Its function is as follows. Catalyzes the methylthiolation of N6-(dimethylallyl)adenosine (i(6)A), leading to the formation of 2-methylthio-N6-(dimethylallyl)adenosine (ms(2)i(6)A) at position 37 in tRNAs that read codons beginning with uridine. This is tRNA-2-methylthio-N(6)-dimethylallyladenosine synthase from Escherichia coli O81 (strain ED1a).